Consider the following 104-residue polypeptide: Large ribosomal subunit protein uL24 (104 aa).

The protein belongs to the universal ribosomal protein uL24 family. In terms of assembly, part of the 50S ribosomal subunit.

Functionally, one of two assembly initiator proteins, it binds directly to the 5'-end of the 23S rRNA, where it nucleates assembly of the 50S subunit. Its function is as follows. One of the proteins that surrounds the polypeptide exit tunnel on the outside of the subunit. The sequence is that of Large ribosomal subunit protein uL24 from Idiomarina loihiensis (strain ATCC BAA-735 / DSM 15497 / L2-TR).